We begin with the raw amino-acid sequence, 148 residues long: SsrA-binding protein (148 aa).

The segment covering Lys-127–Arg-142 has biased composition (basic and acidic residues). Residues Lys-127–Thr-148 are disordered.

The protein belongs to the SmpB family.

It is found in the cytoplasm. Required for rescue of stalled ribosomes mediated by trans-translation. Binds to transfer-messenger RNA (tmRNA), required for stable association of tmRNA with ribosomes. tmRNA and SmpB together mimic tRNA shape, replacing the anticodon stem-loop with SmpB. tmRNA is encoded by the ssrA gene; the 2 termini fold to resemble tRNA(Ala) and it encodes a 'tag peptide', a short internal open reading frame. During trans-translation Ala-aminoacylated tmRNA acts like a tRNA, entering the A-site of stalled ribosomes, displacing the stalled mRNA. The ribosome then switches to translate the ORF on the tmRNA; the nascent peptide is terminated with the 'tag peptide' encoded by the tmRNA and targeted for degradation. The ribosome is freed to recommence translation, which seems to be the essential function of trans-translation. This Aromatoleum aromaticum (strain DSM 19018 / LMG 30748 / EbN1) (Azoarcus sp. (strain EbN1)) protein is SsrA-binding protein.